A 107-amino-acid chain; its full sequence is MTEAILRSTLGARTTVMAALSYLSVLCFVPLLVDRDDEFVYFHAKQGLVIWMWGVLALFALHVPVLGKWIFGFSSMGVLVFSLLGLVSVVFQRAWKLPLISWVAHRI.

At 1 to 13 (MTEAILRSTLGAR) the chain is on the cytoplasmic side. The helical transmembrane segment at 14 to 34 (TTVMAALSYLSVLCFVPLLVD) threads the bilayer. The Lumenal segment spans residues 35–46 (RDDEFVYFHAKQ). A helical membrane pass occupies residues 47–67 (GLVIWMWGVLALFALHVPVLG). The Cytoplasmic segment spans residues 68–69 (KW). The helical transmembrane segment at 70–90 (IFGFSSMGVLVFSLLGLVSVV) threads the bilayer. The Lumenal segment spans residues 91–107 (FQRAWKLPLISWVAHRI).

Belongs to the magnetosome MamF/MmsF protein family. In terms of assembly, may oligomerize.

The protein localises to the magnetosome membrane. With respect to regulation, its function may be negatively regulated by one of the MamGFDC proteins. Plays a major role in synthesis of cubooctahedral magnetite crystals by controlling crystal growth and morphology after nucleation. Has a partially redundant function with MamF. When overexpressed in E.coli the soluble protein self assembles into shells of about 36 nm. This protein mediates the formation of magnetite nanoparticles from a solution of Fe(2+) and Fe(3+) sulfate; the crystals are larger and lack alternative iron oxide/oxyhydroxide species seen in the protein's absence. This is Magnetosome protein MmsF from Paramagnetospirillum magneticum (strain ATCC 700264 / AMB-1) (Magnetospirillum magneticum).